The following is a 250-amino-acid chain: Probable dihydroorotate dehydrogenase B (NAD(+)), electron transfer subunit (250 aa).

Positions 1–89 (MNRITVDQVR…RGPYGNGFQI (89 aa)) constitute an FAD-binding FR-type domain. Positions 200, 205, 208, and 216 each coordinate [2Fe-2S] cluster.

The protein belongs to the PyrK family. Heterotetramer of 2 PyrK and 2 PyrD type B subunits. [2Fe-2S] cluster serves as cofactor. FAD is required as a cofactor.

It participates in pyrimidine metabolism; UMP biosynthesis via de novo pathway; orotate from (S)-dihydroorotate (NAD(+) route): step 1/1. Responsible for channeling the electrons from the oxidation of dihydroorotate from the FMN redox center in the PyrD type B subunit to the ultimate electron acceptor NAD(+). The protein is Probable dihydroorotate dehydrogenase B (NAD(+)), electron transfer subunit of Thermoplasma acidophilum (strain ATCC 25905 / DSM 1728 / JCM 9062 / NBRC 15155 / AMRC-C165).